The following is a 200-amino-acid chain: Proteasome subunit beta 2 (200 aa).

The propeptide at 1–7 is removed in mature form; by autocatalysis; it reads METKKTG. The Nucleophile role is filled by Thr-8.

The protein belongs to the peptidase T1B family. The 20S proteasome core is composed of 14 alpha and 14 beta subunits that assemble into four stacked heptameric rings, resulting in a barrel-shaped structure. The two inner rings, each composed of seven catalytic beta subunits, are sandwiched by two outer rings, each composed of seven alpha subunits. The catalytic chamber with the active sites is on the inside of the barrel. Has a gated structure, the ends of the cylinder being occluded by the N-termini of the alpha-subunits. Is capped at one or both ends by the proteasome regulatory ATPase, PAN.

Its subcellular location is the cytoplasm. It carries out the reaction Cleavage of peptide bonds with very broad specificity.. Its activity is regulated as follows. The formation of the proteasomal ATPase PAN-20S proteasome complex, via the docking of the C-termini of PAN into the intersubunit pockets in the alpha-rings, triggers opening of the gate for substrate entry. Interconversion between the open-gate and close-gate conformations leads to a dynamic regulation of the 20S proteasome proteolysis activity. Its function is as follows. Component of the proteasome core, a large protease complex with broad specificity involved in protein degradation. This Thermococcus onnurineus (strain NA1) protein is Proteasome subunit beta 2.